A 235-amino-acid chain; its full sequence is Putative quercetin 2,3-dioxygenase ZMO1337 (235 aa).

Residues His-57, His-59, His-101, and Glu-103 each contribute to the a divalent metal cation site.

The protein belongs to the pirin family. A divalent metal cation serves as cofactor.

The enzyme catalyses quercetin + O2 = 2-(3,4-dihydroxybenzoyloxy)-4,6-dihydroxybenzoate + CO. It functions in the pathway flavonoid metabolism; quercetin degradation. Putative quercetin 2,3-dioxygenase. This is Putative quercetin 2,3-dioxygenase ZMO1337 from Zymomonas mobilis subsp. mobilis (strain ATCC 31821 / ZM4 / CP4).